We begin with the raw amino-acid sequence, 723 residues long: Polyribonucleotide nucleotidyltransferase (723 aa).

Asp-487 and Asp-493 together coordinate Mg(2+). A KH domain is found at 554–613 (PKILIMHINPDKIREVIGPSGKQINKIIDETGVKIDIEQDGTIFISSVDEAANQKAKQII). An S1 motif domain is found at 623 to 691 (GQVYLGKVKR…KQGRVNLSRK (69 aa)). Positions 702 to 723 (GELPRESREKRGRRPERHRMKP) are disordered. Basic residues predominate over residues 711 to 723 (KRGRRPERHRMKP).

This sequence belongs to the polyribonucleotide nucleotidyltransferase family. It depends on Mg(2+) as a cofactor.

It is found in the cytoplasm. It carries out the reaction RNA(n+1) + phosphate = RNA(n) + a ribonucleoside 5'-diphosphate. In terms of biological role, involved in mRNA degradation. Catalyzes the phosphorolysis of single-stranded polyribonucleotides processively in the 3'- to 5'-direction. The chain is Polyribonucleotide nucleotidyltransferase from Geobacillus kaustophilus (strain HTA426).